A 44-amino-acid polypeptide reads, in one-letter code: Photosystem I reaction center subunit IX (44 aa).

The chain crosses the membrane as a helical span at residues 7-27 (YLSTAPVLATLWFGSLAGLLI).

Belongs to the PsaJ family.

Its subcellular location is the plastid. It localises to the chloroplast thylakoid membrane. Its function is as follows. May help in the organization of the PsaE and PsaF subunits. The chain is Photosystem I reaction center subunit IX from Cycas taitungensis (Prince sago).